Reading from the N-terminus, the 799-residue chain is LPS-assembly protein LptD (799 aa).

An N-terminal signal peptide occupies residues 1–34 (MMHELDLRPHLARFAQRPLALLAWALLQGTSVNA).

It belongs to the LptD family. As to quaternary structure, component of the lipopolysaccharide transport and assembly complex. Interacts with LptE and LptA.

The protein localises to the cell outer membrane. Together with LptE, is involved in the assembly of lipopolysaccharide (LPS) at the surface of the outer membrane. In Albidiferax ferrireducens (strain ATCC BAA-621 / DSM 15236 / T118) (Rhodoferax ferrireducens), this protein is LPS-assembly protein LptD.